Reading from the N-terminus, the 305-residue chain is Probable 4-deoxy-4-formamido-L-arabinose-phosphoundecaprenol deformylase ArnD (305 aa).

Positions 7-262 (TKVGLRIDVD…QAKENNIEFV (256 aa)) constitute a NodB homology domain.

The protein belongs to the polysaccharide deacetylase family. ArnD deformylase subfamily.

The catalysed reaction is 4-deoxy-4-formamido-alpha-L-arabinopyranosyl di-trans,octa-cis-undecaprenyl phosphate + H2O = 4-amino-4-deoxy-alpha-L-arabinopyranosyl di-trans,octa-cis-undecaprenyl phosphate + formate. The protein operates within glycolipid biosynthesis; 4-amino-4-deoxy-alpha-L-arabinose undecaprenyl phosphate biosynthesis; 4-amino-4-deoxy-alpha-L-arabinose undecaprenyl phosphate from UDP-4-deoxy-4-formamido-beta-L-arabinose and undecaprenyl phosphate: step 2/2. Its pathway is bacterial outer membrane biogenesis; lipopolysaccharide biosynthesis. Its function is as follows. Catalyzes the deformylation of 4-deoxy-4-formamido-L-arabinose-phosphoundecaprenol to 4-amino-4-deoxy-L-arabinose-phosphoundecaprenol. The modified arabinose is attached to lipid A and is required for resistance to polymyxin and cationic antimicrobial peptides. The sequence is that of Probable 4-deoxy-4-formamido-L-arabinose-phosphoundecaprenol deformylase ArnD from Shewanella sediminis (strain HAW-EB3).